Here is a 249-residue protein sequence, read N- to C-terminus: tRNA (guanine-N(1)-)-methyltransferase (249 aa).

S-adenosyl-L-methionine contacts are provided by residues glycine 117 and leucine 137 to leucine 142.

It belongs to the RNA methyltransferase TrmD family. Homodimer.

It is found in the cytoplasm. It catalyses the reaction guanosine(37) in tRNA + S-adenosyl-L-methionine = N(1)-methylguanosine(37) in tRNA + S-adenosyl-L-homocysteine + H(+). Its function is as follows. Specifically methylates guanosine-37 in various tRNAs. The sequence is that of tRNA (guanine-N(1)-)-methyltransferase from Janthinobacterium sp. (strain Marseille) (Minibacterium massiliensis).